The chain runs to 662 residues: MPPSKAEKRGLTLEKLASYDDVITDALVDKIYYWATIRKNRGTRFTASRGLQEEDIAGVIREQVIWDKDPVEAVQQLLDLPGLRKYMKGLRDEKDQDQFKRHLRRYVNIYMPDCPFEVTTTNRYTITDHEASITARRDINPREEIKYLTGVQVAMTEEQEKTLELARKDFSLVISSRKKTRSLFLGPARFANHDCDANARLSTKGYDGMQIVAVKPINEGDEITVSYGDDYFGDNNEECLCHTCEDRQQNGWAPMKRVEDSDDEDMEEAESPVENPSEATSSGTATSGGKRARDITEEDAGADLPPTSKRARIEKKPSPTKARASDHLREATLKKVHSTSSLRREMPVSSIEDPSANINVTSPQMTQDIRNQQRDGLLTVSLDETSSSRESTPQSPLMAASPKSSHSTDATSVDDEHHVDSLPKIKVEPEVVHENPALGVATVKEEVITTTVNAPWPSPPAEDDEMSDLSELSDSMEFDSVKQQIVKRKFRPTLRTTRSKSRYEVHNRVGTPVSSAVGQDGEWVENPRKPGDYMTSSSLLSAKFSKWVECQTCDVQFVQQDGYNTRKECPRCERHSKLYGYAWPKTEREGKHDKEERITDHRIVHRFVDPDEERELKRGKTKKILKESIRERFSTPRSGRESMSASVEVDSGRKRRRVRKTM.

The 115-residue stretch at 114–228 (CPFEVTTTNR…EGDEITVSYG (115 aa)) folds into the SET domain. 2 disordered regions span residues 252 to 418 (WAPM…DEHH) and 627 to 662 (ESIR…RKTM). Residues 260–271 (DSDDEDMEEAES) are compositionally biased toward acidic residues. Residues 279–289 (ATSSGTATSGG) are compositionally biased toward low complexity. Residues 323–333 (RASDHLREATL) show a composition bias toward basic and acidic residues. Polar residues-rich tracts occupy residues 356–370 (ANIN…QDIR), 382–395 (LDET…TPQS), and 402–411 (PKSSHSTDAT). Residues 627–640 (ESIRERFSTPRSGR) show a composition bias toward basic and acidic residues. The segment covering 653-662 (RKRRRVRKTM) has biased composition (basic residues).

This sequence belongs to the class V-like SAM-binding methyltransferase superfamily. Histone-lysine methyltransferase family. Suvar4-20 subfamily.

The protein resides in the nucleus. It localises to the chromosome. It catalyses the reaction L-lysyl(20)-[histone H4] + 3 S-adenosyl-L-methionine = N(6),N(6),N(6)-trimethyl-L-lysyl(20)-[histone H4] + 3 S-adenosyl-L-homocysteine + 3 H(+). Functionally, histone methyltransferase that trimethylates 'Lys-20' of histone H4 to form H4K20me3. The sequence is that of Histone-lysine N-methyltransferase SET9 (SET9) from Phaeosphaeria nodorum (strain SN15 / ATCC MYA-4574 / FGSC 10173) (Glume blotch fungus).